The following is a 575-amino-acid chain: Septation ring formation regulator EzrA (575 aa).

Topologically, residues M1 to Y8 are extracellular. The helical transmembrane segment at L9–L27 threads the bilayer. Residues R28 to F575 lie on the Cytoplasmic side of the membrane. Coiled-coil stretches lie at residues Q110–L191, L265–I301, V354–D416, and T456–A526.

This sequence belongs to the EzrA family.

The protein resides in the cell membrane. Functionally, negative regulator of FtsZ ring formation; modulates the frequency and position of FtsZ ring formation. Inhibits FtsZ ring formation at polar sites. Interacts either with FtsZ or with one of its binding partners to promote depolymerization. The protein is Septation ring formation regulator EzrA of Streptococcus pneumoniae (strain JJA).